A 552-amino-acid chain; its full sequence is Non-structural protein NS1 (552 aa).

It belongs to the orbivirus non-structural protein NS1 family.

In Antilocapra americana (Pronghorn), this protein is Non-structural protein NS1 (Segment-5).